Here is a 230-residue protein sequence, read N- to C-terminus: Ureidoacrylate amidohydrolase RutB (230 aa).

The active-site Proton acceptor is Asp-24. Lys-133 is an active-site residue. Cys-166 (nucleophile) is an active-site residue.

This sequence belongs to the isochorismatase family. RutB subfamily.

The enzyme catalyses (Z)-3-ureidoacrylate + H2O + H(+) = (Z)-3-aminoacrylate + NH4(+) + CO2. It catalyses the reaction (Z)-3-ureidoacrylate + H2O = (Z)-3-aminoacrylate + carbamate + H(+). The catalysed reaction is (Z)-2-methylureidoacrylate + H2O + H(+) = (Z)-2-methylaminoacrylate + NH4(+) + CO2. Functionally, hydrolyzes ureidoacrylate to form aminoacrylate and carbamate. The carbamate hydrolyzes spontaneously, thereby releasing one of the nitrogen atoms of the pyrimidine ring as ammonia and one of its carbon atoms as CO2. The sequence is that of Ureidoacrylate amidohydrolase RutB from Escherichia coli O7:K1 (strain IAI39 / ExPEC).